A 588-amino-acid chain; its full sequence is Outer membrane transporter CdiB (588 aa).

The 76-residue stretch at 104 to 179 folds into the POTRA domain; that stretch reads FTVSSIVVSG…GVLHITVMEG (76 aa).

Belongs to the TPS (TC 1.B.20) family.

The protein resides in the cell outer membrane. Functionally, potential outer membrane protein component of a toxin-immunity protein module, which functions as a cellular contact-dependent growth inhibition (CDI) system. CDI modules allow bacteria to communicate with and inhibit the growth of closely related neighboring bacteria in a contact-dependent fashion. This protein may be required for secretion and assembly of the CdiA toxin protein. Inhibitory cells must be in logarithmic (not stationary) phase to inhibit growth of their targets, while the presence of P or S but not type 1 pili protects the target cells against growth inhibition. Probable member of a two partner secretion pathway (TPS) in which it mediates the secretion of CdiA. In Escherichia coli, this protein is Outer membrane transporter CdiB.